We begin with the raw amino-acid sequence, 182 residues long: DOMON domain-containing protein Y73F4A.1 (182 aa).

An N-terminal signal peptide occupies residues 1–18 (MFVLAIVFAFVFIPSSSS). The DOMON domain maps to 26-143 (ELVSMNWNVK…CLNWMVVPGG (118 aa)). Asparagine 47 and asparagine 128 each carry an N-linked (GlcNAc...) asparagine glycan.

Its subcellular location is the secreted. The protein is DOMON domain-containing protein Y73F4A.1 of Caenorhabditis elegans.